A 187-amino-acid chain; its full sequence is Major allergen Equ c 1 (187 aa).

Residues 1–15 (MKLLLLCLGLILVCA) constitute a signal peptide (or 16, or 21). Residues N53 and N68 are each glycosylated (N-linked (GlcNAc...) asparagine). Cysteines 83 and 176 form a disulfide.

The protein belongs to the calycin superfamily. Lipocalin family. Homodimer. Post-translationally, several N-terminal ends may be due to cleavage by signal peptidase at different sites or may be generated by proteolytic processing of the secreted protein. In terms of processing, analysis of the sugar composition shows the presence of GalNAc, Gal, NeuAc, GlcNAc, and Man. May be also O-glycosylated. As to expression, expressed in liver and in sublingual and submaxillary salivary glands. Highly concentrated in secretory fluid such as saliva and urine as well as in hair dandruff extract.

It localises to the secreted. In Equus caballus (Horse), this protein is Major allergen Equ c 1.